Consider the following 281-residue polypeptide: uncharacterized protein (281 aa).

3 consecutive transmembrane segments (helical) span residues Leu23–Ala45, Ile65–Gly87, and Thr94–Ser116.

It belongs to the MscS (TC 1.A.23) family.

It localises to the cell membrane. This is an uncharacterized protein from Buchnera aphidicola subsp. Baizongia pistaciae (strain Bp).